The primary structure comprises 365 residues: 2'-hydroxybiphenyl-2-sulfinate desulfinase (365 aa).

Cysteine 27 is a catalytic residue. The 2'-hydroxybiphenyl-2-sulfinate site is built by cysteine 27, histidine 60, and arginine 70. Arginine 70 is an active-site residue.

The protein belongs to the DszB desulfinase family. In terms of assembly, monomer.

It localises to the cytoplasm. It carries out the reaction 2'-hydroxybiphenyl-2-sulfinate + H2O = biphenyl-2-ol + sulfite + H(+). It participates in sulfur metabolism; dibenzothiophene degradation. Catalyzes the third and final step of the '4S' desulfurization pathway that removes covalently bound sulfur from dibenzothiophene (DBT) without breaking carbon-carbon bonds. Oxidizes 2-(2'-hydroxyphenyl)benzene sulphinate (HBPS) to 2-hydroxybiphenyl (HBP) plus sulfite. The rate-limiting step of the '4S' desulfurization pathway. The polypeptide is 2'-hydroxybiphenyl-2-sulfinate desulfinase (Rhodococcus erythropolis (Arthrobacter picolinophilus)).